The chain runs to 198 residues: tRNA (pseudouridine(54)-N(1))-methyltransferase (198 aa).

Leucine 128 serves as a coordination point for S-adenosyl-L-methionine.

Belongs to the methyltransferase superfamily. TrmY family. As to quaternary structure, homodimer.

Its subcellular location is the cytoplasm. It carries out the reaction pseudouridine(54) in tRNA + S-adenosyl-L-methionine = N(1)-methylpseudouridine(54) in tRNA + S-adenosyl-L-homocysteine + H(+). Functionally, specifically catalyzes the N1-methylation of pseudouridine at position 54 (Psi54) in tRNAs. The polypeptide is tRNA (pseudouridine(54)-N(1))-methyltransferase (Haloferax volcanii (strain ATCC 29605 / DSM 3757 / JCM 8879 / NBRC 14742 / NCIMB 2012 / VKM B-1768 / DS2) (Halobacterium volcanii)).